The primary structure comprises 335 residues: DNA-directed RNA polymerase subunit alpha (335 aa).

The alpha N-terminal domain (alpha-NTD) stretch occupies residues 1 to 233; it reads MVREKITVST…DLFIPFLHME (233 aa). The tract at residues 265-335 is alpha C-terminal domain (alpha-CTD); the sequence is KEIALKSIFI…KQLVIFLPKK (71 aa).

This sequence belongs to the RNA polymerase alpha chain family. As to quaternary structure, in plastids the minimal PEP RNA polymerase catalytic core is composed of four subunits: alpha, beta, beta', and beta''. When a (nuclear-encoded) sigma factor is associated with the core the holoenzyme is formed, which can initiate transcription.

It is found in the plastid. The protein localises to the chloroplast. The enzyme catalyses RNA(n) + a ribonucleoside 5'-triphosphate = RNA(n+1) + diphosphate. Its function is as follows. DNA-dependent RNA polymerase catalyzes the transcription of DNA into RNA using the four ribonucleoside triphosphates as substrates. The chain is DNA-directed RNA polymerase subunit alpha from Coffea arabica (Arabian coffee).